Reading from the N-terminus, the 158-residue chain is 6,7-dimethyl-8-ribityllumazine synthase (158 aa).

5-amino-6-(D-ribitylamino)uracil-binding positions include Phe-22, 57-59 (AVE), and 81-83 (AVI). 86–87 (GT) is a (2S)-2-hydroxy-3-oxobutyl phosphate binding site. His-89 functions as the Proton donor in the catalytic mechanism. Residue Phe-114 participates in 5-amino-6-(D-ribitylamino)uracil binding. Arg-128 is a (2S)-2-hydroxy-3-oxobutyl phosphate binding site.

The protein belongs to the DMRL synthase family. As to quaternary structure, forms an icosahedral capsid composed of 60 subunits, arranged as a dodecamer of pentamers.

It catalyses the reaction (2S)-2-hydroxy-3-oxobutyl phosphate + 5-amino-6-(D-ribitylamino)uracil = 6,7-dimethyl-8-(1-D-ribityl)lumazine + phosphate + 2 H2O + H(+). It participates in cofactor biosynthesis; riboflavin biosynthesis; riboflavin from 2-hydroxy-3-oxobutyl phosphate and 5-amino-6-(D-ribitylamino)uracil: step 1/2. Its function is as follows. Catalyzes the formation of 6,7-dimethyl-8-ribityllumazine by condensation of 5-amino-6-(D-ribitylamino)uracil with 3,4-dihydroxy-2-butanone 4-phosphate. This is the penultimate step in the biosynthesis of riboflavin. This Shewanella halifaxensis (strain HAW-EB4) protein is 6,7-dimethyl-8-ribityllumazine synthase.